Reading from the N-terminus, the 249-residue chain is Nicotinamide/nicotinic acid mononucleotide adenylyltransferase (249 aa).

NAD(+)-binding residues include Ser-34 and Phe-35. ATP contacts are provided by His-42 and Lys-75. 6 residues coordinate NAD(+): Thr-112, Gly-141, Asp-143, Trp-154, Arg-173, and Asn-204. An ATP-binding site is contributed by Ser-209–Arg-210.

Belongs to the eukaryotic NMN adenylyltransferase family. A divalent metal cation serves as cofactor.

The catalysed reaction is beta-nicotinamide D-ribonucleotide + ATP + H(+) = diphosphate + NAD(+). The enzyme catalyses nicotinate beta-D-ribonucleotide + ATP + H(+) = deamido-NAD(+) + diphosphate. It participates in cofactor biosynthesis; NAD(+) biosynthesis; deamido-NAD(+) from nicotinate D-ribonucleotide: step 1/1. Its pathway is cofactor biosynthesis; NAD(+) biosynthesis; NAD(+) from nicotinamide D-ribonucleotide: step 1/1. Catalyzes the formation of NAD(+) from nicotinamide mononucleotide (NMN) and ATP. Can also use the deamidated form; nicotinic acid mononucleotide (NaMN) as substrate. The sequence is that of Nicotinamide/nicotinic acid mononucleotide adenylyltransferase from Oryza sativa subsp. japonica (Rice).